Here is a 214-residue protein sequence, read N- to C-terminus: Putative ankyrin repeat protein R844 (214 aa).

ANK repeat units follow at residues Val41 to Phe70, Ser81 to Thr110, Asp111 to Ala140, Asn142 to Ser170, and Asn172 to Ala200.

The chain is Putative ankyrin repeat protein R844 from Acanthamoeba polyphaga mimivirus (APMV).